Consider the following 1464-residue polypeptide: ABC transporter G family member 35 (1464 aa).

The disordered stretch occupies residues 1-26; the sequence is MDAAAEMQKVVSLRRGGGGSSSRGAA. Residues 173–446 enclose the ABC transporter 1 domain; the sequence is ANALGILPNK…FELMGFKCPE (274 aa). 206-213 is a binding site for ATP; that stretch reads GPPGSGKT. In terms of domain architecture, ABC transmembrane type-2 1 spans 524-737; it reads ELLKANIDRE…AQNAISVNEF (214 aa). Helical transmembrane passes span 542-562, 575-595, 630-650, 662-682, 686-706, 715-735, and 774-794; these read FVYI…MTVF, GVIF…NGLS, IPMS…VIGF, LLML…GGAA, IVAN…GGFI, WWIW…ISVN, and IGFG…TLAL. Residues 867–1119 form the ABC transporter 2 domain; that stretch reads LTFDNIKYSV…ELIKYFEGIK (253 aa). 912–919 is a binding site for ATP; that stretch reads GVSGAGKT. Residues 1192-1406 enclose the ABC transmembrane type-2 2 domain; the sequence is NQCLACLWKM…TLYGLVASQF (215 aa). The next 7 helical transmembrane spans lie at 1213-1233, 1243-1263, 1299-1319, 1326-1346, 1356-1376, 1387-1407, and 1436-1456; these read AIRL…FWDL, LFNA…LNSQ, FPYT…MIGF, FFWY…YGMM, VASI…GFII, WYCW…SQFG, and VVAV…GFAI.

Belongs to the ABC transporter superfamily. ABCG family. PDR (TC 3.A.1.205) subfamily.

It localises to the membrane. Its function is as follows. May be a general defense protein. This Oryza sativa subsp. japonica (Rice) protein is ABC transporter G family member 35.